The chain runs to 626 residues: Leucine-rich repeat and fibronectin type-III domain-containing protein 3 (626 aa).

A signal peptide spans 1-16; sequence MAVLPLLLCLLPLAPA. Residues 17–539 lie on the Extracellular side of the membrane; it reads SSPPQPATSS…PHAPFLGGTM (523 aa). The LRRNT domain occupies 19–59; that stretch reads PPQPATSSPCPRRCRCQTQSLPLSVLCPGAGLLFVPPSLDR. LRR repeat units follow at residues 84–105, 108–129, 132–153, 157–178, 181–202, and 205–226; these read GLLH…AFAD, ALRA…QLRG, NLRH…ALDD, TLED…ALGR, NVNT…AFSR, and KLAR…PLFS. Residues 249-295 form the LRRCT domain; that stretch reads NPLHCNCELVWLRRLAREDDLEACASPPALGGRYFWAVGEEEFVCEP. The Ig-like domain occupies 295-382; sequence PPVVTHRSPP…GEATAAVELT (88 aa). One can recognise a Fibronectin type-III 1 domain in the interval 308-395; the sequence is PAGRPAALRC…PPPPQLANST (88 aa). Residues cysteine 317 and cysteine 366 are joined by a disulfide bond. Asparagine 339, asparagine 348, and asparagine 393 each carry an N-linked (GlcNAc...) asparagine glycan. The disordered stretch occupies residues 382-423; sequence TVGPPPPPQLANSTSCDPPRDGEPDALTPPSAASASAKVADT. Positions 406–423 are enriched in low complexity; it reads DALTPPSAASASAKVADT. The region spanning 425 to 523 is the Fibronectin type-III 2 domain; that stretch reads APTDRGVQVT…GCARFSTEPA (99 aa). Residues 540 to 560 traverse the membrane as a helical segment; it reads IIALGGVIVASVLVFIFVLLL. Residues 561–626 are Cytoplasmic-facing; that stretch reads RYKVHGVQPP…WGPSHEPAGP (66 aa).

Belongs to the LRFN family. Can form heteromeric complexes with LRFN1, LRFN2, LRFN4 and LRFN5. Able to form homomeric complexes across cell junctions, between adjacent cells. Does not interact with DLG4. N-glycosylated. As to expression, expressed in brain. Within brain, expressed in hippocampus, cerebellum, olfactory bulb and forebrain (at protein level).

The protein resides in the cell membrane. The protein localises to the cell projection. It is found in the axon. Its subcellular location is the dendrite. It localises to the synapse. The protein resides in the presynaptic cell membrane. The protein localises to the postsynaptic cell membrane. Cell adhesion molecule that mediates homophilic cell-cell adhesion in a Ca(2+)-independent manner. Promotes neurite outgrowth in hippocampal neurons. In Rattus norvegicus (Rat), this protein is Leucine-rich repeat and fibronectin type-III domain-containing protein 3.